Here is a 150-residue protein sequence, read N- to C-terminus: C-type lectin 37Db (150 aa).

The signal sequence occupies residues 1–20 (MMVKLLLLFLVCWSALPLES). The 118-residue stretch at 31 to 148 (IGEKQYYISL…CYSSVAFICQ (118 aa)) folds into the C-type lectin domain. 2 disulfides stabilise this stretch: Cys-52–Cys-147 and Cys-122–Cys-139. 2 N-linked (GlcNAc...) asparagine glycosylation sites follow: Asn-107 and Asn-115.

It is found in the secreted. Functionally, galactose-specific lectin that displays calcium-dependent activity. Binds to the surface of hemocytes and enhances hemocyte encapsulation and melanization. This is likely by interacting with carbohydrates on the surface of the hemocytes. Also displays agglutination activity against the Gram-negative bacterium E.coli. The polypeptide is C-type lectin 37Db (Drosophila melanogaster (Fruit fly)).